A 381-amino-acid polypeptide reads, in one-letter code: Opsin Rh2 (381 aa).

The Extracellular segment spans residues 1 to 56 (MERSHLPETPFDLAHSGPRFQAQSSGNGSVLDNVLPDMAHLVNPYWSRFAPMDPMM). Asparagine 27 carries N-linked (GlcNAc...) asparagine glycosylation. The helical transmembrane segment at 57-81 (SKILGLFTLAIMIISCCGNGVVVYI) threads the bilayer. Residues 82–93 (FGGTKSLRTPAN) lie on the Cytoplasmic side of the membrane. The helical transmembrane segment at 94–119 (LLVLNLAFSDFCMMASQSPVMIINFY) threads the bilayer. At 120 to 133 (YETWVLGPLWCDIY) the chain is on the extracellular side. Cysteines 130 and 207 form a disulfide. Residues 134 to 153 (AGCGSLFGCVSIWSMCMIAF) traverse the membrane as a helical segment. The Cytoplasmic segment spans residues 154-172 (DRYNVIVKGINGTPMTIKT). A helical transmembrane segment spans residues 173–196 (SIMKILFIWMMAVFWTVMPLIGWS). Residues 197–220 (AYVPEGNLTACSIDYMTRMWNPRS) are Extracellular-facing. A helical membrane pass occupies residues 221–248 (YLITYSLFVYYTPLFLICYSYWFIIAAV). The Cytoplasmic segment spans residues 249-283 (AAHEKAMREQAKKMNVKSLRSSEDCDKSAEGKLAK). A helical transmembrane segment spans residues 284–307 (VALTTISLWFMAWTPYLVICYFGL). The Extracellular segment spans residues 308-314 (FKIDGLT). A helical membrane pass occupies residues 315–339 (PLTTIWGATFAKTSAVYNPIVYGIS). Residue lysine 326 is modified to N6-(retinylidene)lysine. Residues 340 to 381 (HPKYRIVLKEKCPMCVFGNTDEPKPDAPASDTETTSEADSKA) lie on the Cytoplasmic side of the membrane. The tract at residues 359–381 (TDEPKPDAPASDTETTSEADSKA) is disordered. Residues 370-381 (DTETTSEADSKA) are compositionally biased toward polar residues.

Belongs to the G-protein coupled receptor 1 family. Opsin subfamily. In terms of processing, phosphorylated on some or all of the serine and threonine residues present in the C-terminal region. In terms of tissue distribution, predominant opsin expressed in the dorsal ocelli.

The protein resides in the membrane. Its function is as follows. Visual pigments are the light-absorbing molecules that mediate vision. They consist of an apoprotein, opsin, covalently linked to cis-retinal. This is Opsin Rh2 (Rh2) from Drosophila melanogaster (Fruit fly).